The chain runs to 224 residues: V-type proton ATPase subunit S1-like protein (224 aa).

A helical membrane pass occupies residues Pro-147–Leu-167.

The protein belongs to the vacuolar ATPase subunit S1 family.

It localises to the membrane. The sequence is that of V-type proton ATPase subunit S1-like protein (ATP6AP1L) from Homo sapiens (Human).